We begin with the raw amino-acid sequence, 241 residues long: ATP synthase subunit a (241 aa).

The next 5 membrane-spanning stretches (helical) occupy residues Gly30–Gly50, Phe91–Trp111, Ile128–Ser148, Leu193–Leu213, and Gly214–Gly234.

This sequence belongs to the ATPase A chain family. In terms of assembly, F-type ATPases have 2 components, CF(1) - the catalytic core - and CF(0) - the membrane proton channel. CF(1) has five subunits: alpha(3), beta(3), gamma(1), delta(1), epsilon(1). CF(0) has four main subunits: a, b, b' and c.

Its subcellular location is the cellular thylakoid membrane. Its function is as follows. Key component of the proton channel; it plays a direct role in the translocation of protons across the membrane. This chain is ATP synthase subunit a, found in Prochlorococcus marinus (strain MIT 9215).